The chain runs to 446 residues: 6-methylsalicylate 1-monooxygenase atA (446 aa).

The helical transmembrane segment at 7 to 27 (VSVAIIGGGIGGLSLAIGLLQ) threads the bilayer. FAD contacts are provided by Glu37 and Ala50. The N-linked (GlcNAc...) asparagine glycan is linked to Asn107. Position 116 (Arg116) interacts with FAD. The active site involves Arg200. FAD is bound by residues Asp311 and Ala324.

It belongs to the paxM FAD-dependent monooxygenase family. FAD is required as a cofactor.

It localises to the membrane. It carries out the reaction 6-methylsalicylate + AH2 + O2 + H(+) = 3-methylcatechol + A + CO2 + H2O. Its pathway is secondary metabolite biosynthesis. In terms of biological role, 6-methylsalicylate 1-monooxygenase; part of the gene cluster that mediates the biosynthesis of terreic acid, a quinone epoxide inhibitor of Bruton's tyrosine kinase. The first step of the pathway is the synthesis of 6-methylsalicylic acid (6-MSA) by the 6-methylsalicylic acid synthase atX. In the biosynthesis of 6-MSA, atX utilizes one acetyl-CoA and three malonyl-CoAs as its substrates and catalyzes a series of programmed reactions including Claisen condensation, reduction, aldol cyclization, and the hydrolytic cleavage that yields 6-MSA. The 6-methylsalicylate 1-monooxygenase atA then catalyzes the decarboxylative hydroxylation of 6-MSA to 3-methylcatechol. The next step is the conversion of 3-methylcatechol to 3-methyl-1,2,4-benzenetriol by cytochrome P450 monooxygenase atE, which is enhanced by cytochrome P450 monooxygenase atG. Then, the epoxidase atD catalyzes the epoxidation and hydroxyl oxidation of 3-methyl-1,2,4-benzenetriol to terremutin. Lastly, GMC oxidoreductase atC oxidizes terremutin to terreic acid. This is 6-methylsalicylate 1-monooxygenase atA from Aspergillus terreus (strain NIH 2624 / FGSC A1156).